Consider the following 311-residue polypeptide: Meteorin-like protein (311 aa).

The signal sequence occupies residues 1–45 (MRGVVWAARRRAGQQWPRSPGPGPGPPPPPPLLLLLLLLLGGASA). C52 and C75 form a disulfide bridge. A glycan (N-linked (GlcNAc...) asparagine) is linked at N103. 4 disulfides stabilise this stretch: C107–C143, C188–C260, C191–C284, and C201–C306.

Belongs to the meteorin family. As to expression, abundantly expressed in adipose tissue.

It is found in the secreted. Functionally, hormone induced following exercise or cold exposure that promotes energy expenditure. Induced either in the skeletal muscle after exercise or in adipose tissue following cold exposure and is present in the circulation. Able to stimulate energy expenditure associated with the browning of the white fat depots and improves glucose tolerance. Does not promote an increase in a thermogenic gene program via direct action on adipocytes, but acts by stimulating several immune cell subtypes to enter the adipose tissue and activate their prothermogenic actions. Stimulates an eosinophil-dependent increase in IL4 expression and promotes alternative activation of adipose tissue macrophages, which are required for the increased expression of the thermogenic and anti-inflammatory gene programs in fat. Required for some cold-induced thermogenic responses, suggesting a role in metabolic adaptations to cold temperatures. The polypeptide is Meteorin-like protein (Metrnl) (Rattus norvegicus (Rat)).